A 487-amino-acid chain; its full sequence is MSHSPTPLAAIVLAAGKGTRMKSQKAKVLHEVGGRPLAWFPTRRALEIGANPVVAVVGHQAEAVEAALAATLPGAPLRFAVQREQLGTAHAVLSAREALGRYQGAVLILSGDTPLLRAETLSRVVAARAGATLSLATMRLADPHGYGRIVRDPAGTPARVVEEKDATDAERALDEVNAGLYCADAAFLWEALSKVGSANAQREFYLTDLVAMAARAGGVVAVPVPPEEASGVNDREELARAGRVLLRRRASELMRSGVTIEDPERFDCDEGVEIGADAVIEPNVRLKGRTRIGAGCRLGAGAILTDAVLADGVTVKPYTVIEEATVAARAILGPFSRLRPGSDIGEEAHVGNFVETKKARLGKGAKANHLTYLGDATIGAGANVGAGTITCNYDGEKKHPTTIGEGAFIGSDSILVAPIEIGAGAYVAAGSTLTESVPPGALALGRAKQVTKEGWVARRKAEAQNKGAAEAAPAPSPADSPRGGRAS.

The tract at residues 1–235 (MSHSPTPLAA…PEEASGVNDR (235 aa)) is pyrophosphorylase. UDP-N-acetyl-alpha-D-glucosamine is bound by residues 13-16 (LAAG), Lys27, Gln82, 87-88 (GT), 110-112 (SGD), Gly147, Glu162, Asn177, and Asn233. Residue Asp112 coordinates Mg(2+). Asn233 serves as a coordination point for Mg(2+). The tract at residues 236–256 (EELARAGRVLLRRRASELMRS) is linker. Residues 257-487 (GVTIEDPERF…ADSPRGGRAS (231 aa)) are N-acetyltransferase. UDP-N-acetyl-alpha-D-glucosamine is bound by residues Arg339 and Lys357. His369 (proton acceptor) is an active-site residue. The UDP-N-acetyl-alpha-D-glucosamine site is built by Tyr372 and Asn383. Residues Ala386, 392–393 (NY), Ser411, Ala429, and Arg446 contribute to the acetyl-CoA site. Residues 453–487 (EGWVARRKAEAQNKGAAEAAPAPSPADSPRGGRAS) form a disordered region. Low complexity predominate over residues 468 to 481 (AAEAAPAPSPADSP).

It in the N-terminal section; belongs to the N-acetylglucosamine-1-phosphate uridyltransferase family. The protein in the C-terminal section; belongs to the transferase hexapeptide repeat family. In terms of assembly, homotrimer. It depends on Mg(2+) as a cofactor.

It is found in the cytoplasm. The enzyme catalyses alpha-D-glucosamine 1-phosphate + acetyl-CoA = N-acetyl-alpha-D-glucosamine 1-phosphate + CoA + H(+). It catalyses the reaction N-acetyl-alpha-D-glucosamine 1-phosphate + UTP + H(+) = UDP-N-acetyl-alpha-D-glucosamine + diphosphate. The protein operates within nucleotide-sugar biosynthesis; UDP-N-acetyl-alpha-D-glucosamine biosynthesis; N-acetyl-alpha-D-glucosamine 1-phosphate from alpha-D-glucosamine 6-phosphate (route II): step 2/2. Its pathway is nucleotide-sugar biosynthesis; UDP-N-acetyl-alpha-D-glucosamine biosynthesis; UDP-N-acetyl-alpha-D-glucosamine from N-acetyl-alpha-D-glucosamine 1-phosphate: step 1/1. It participates in bacterial outer membrane biogenesis; LPS lipid A biosynthesis. Its function is as follows. Catalyzes the last two sequential reactions in the de novo biosynthetic pathway for UDP-N-acetylglucosamine (UDP-GlcNAc). The C-terminal domain catalyzes the transfer of acetyl group from acetyl coenzyme A to glucosamine-1-phosphate (GlcN-1-P) to produce N-acetylglucosamine-1-phosphate (GlcNAc-1-P), which is converted into UDP-GlcNAc by the transfer of uridine 5-monophosphate (from uridine 5-triphosphate), a reaction catalyzed by the N-terminal domain. The sequence is that of Bifunctional protein GlmU from Anaeromyxobacter sp. (strain Fw109-5).